Reading from the N-terminus, the 309-residue chain is Ribosomal RNA small subunit methyltransferase H (309 aa).

S-adenosyl-L-methionine contacts are provided by residues 44–46 (GGH), aspartate 62, phenylalanine 102, aspartate 118, and glutamine 125. The tract at residues 289–309 (LEQQRNSRARSAKLRVAARSS) is disordered.

Belongs to the methyltransferase superfamily. RsmH family.

It localises to the cytoplasm. It carries out the reaction cytidine(1402) in 16S rRNA + S-adenosyl-L-methionine = N(4)-methylcytidine(1402) in 16S rRNA + S-adenosyl-L-homocysteine + H(+). Functionally, specifically methylates the N4 position of cytidine in position 1402 (C1402) of 16S rRNA. The protein is Ribosomal RNA small subunit methyltransferase H of Synechococcus sp. (strain JA-3-3Ab) (Cyanobacteria bacterium Yellowstone A-Prime).